A 190-amino-acid polypeptide reads, in one-letter code: Dynein axonemal light chain 1 (190 aa).

4 LRR repeats span residues 49-70, 71-92, 94-115, and 116-137; these read VCEK…NGLK, NLKI…EAVG, SLEE…HVLK, and KLKV…NKLQ. The LRRCT domain maps to 150 to 190; it reads NPLEEKHSAEGDWQDRVTKSLKALKKLDGTPIIKNDEEEED.

This sequence belongs to the dynein light chain LC1-type family. In terms of assembly, interacts with DNAH5, a outer arm dynein heavy chain. Interacts with tubulin located within the A-tubule of the outer doublets in a ATP-independent manner.

The protein resides in the cytoplasm. It localises to the cytoskeleton. The protein localises to the cilium axoneme. Functionally, part of the multisubunit axonemal ATPase complexes that generate the force for cilia motility and govern beat frequency. Component of the outer arm dynein (ODA). May be involved in a mechanosensory feedback mechanism controlling ODA activity based on external conformational cues by tethering the outer arm dynein heavy chain (DNAH5) to the microtubule within the axoneme. This Ciona intestinalis (Transparent sea squirt) protein is Dynein axonemal light chain 1 (DNAL1).